The chain runs to 344 residues: Phenylalanine--tRNA ligase alpha subunit (344 aa).

A Mg(2+)-binding site is contributed by E256.

Belongs to the class-II aminoacyl-tRNA synthetase family. Phe-tRNA synthetase alpha subunit type 1 subfamily. In terms of assembly, tetramer of two alpha and two beta subunits. Requires Mg(2+) as cofactor.

The protein localises to the cytoplasm. The catalysed reaction is tRNA(Phe) + L-phenylalanine + ATP = L-phenylalanyl-tRNA(Phe) + AMP + diphosphate + H(+). This chain is Phenylalanine--tRNA ligase alpha subunit, found in Bacillus licheniformis (strain ATCC 14580 / DSM 13 / JCM 2505 / CCUG 7422 / NBRC 12200 / NCIMB 9375 / NCTC 10341 / NRRL NRS-1264 / Gibson 46).